Reading from the N-terminus, the 240-residue chain is Uridylate kinase (240 aa).

12 to 15 (KLSG) lines the ATP pocket. Residues 20–25 (GEQGFG) are involved in allosteric activation by GTP. G54 provides a ligand contact to UMP. Residues G55 and R59 each coordinate ATP. UMP is bound by residues D74 and 135-142 (TGNPYFST). ATP is bound by residues N163, Y169, and D172.

Belongs to the UMP kinase family. As to quaternary structure, homohexamer.

The protein resides in the cytoplasm. It catalyses the reaction UMP + ATP = UDP + ADP. The protein operates within pyrimidine metabolism; CTP biosynthesis via de novo pathway; UDP from UMP (UMPK route): step 1/1. With respect to regulation, allosterically activated by GTP. Inhibited by UTP. Its function is as follows. Catalyzes the reversible phosphorylation of UMP to UDP. This is Uridylate kinase from Bacillus anthracis.